Reading from the N-terminus, the 78-residue chain is MSGLGIMVLTLLLLVFMEASHQDAGEKQATQRDAINVRRRRSLARRTVTEECEEDCEDEEKHCCNTNNGPSCARLCFG.

A signal peptide spans 1–19 (MSGLGIMVLTLLLLVFMEA). Residues 20–44 (SHQDAGEKQATQRDAINVRRRRSLA) constitute a propeptide that is removed on maturation. 3 disulfides stabilise this stretch: cysteine 52-cysteine 64, cysteine 56-cysteine 72, and cysteine 63-cysteine 76. Residue phenylalanine 77 is modified to Phenylalanine amide.

The protein belongs to the conotoxin O3 superfamily. As to expression, expressed by the venom duct.

The protein localises to the secreted. In Conus caracteristicus (Characteristic cone), this protein is Conotoxin CaFr179.